The sequence spans 251 residues: MSAKPQPIAAANWKCNGTTASIEKLVQVFNEHTISHDVQCVVAPTFVHIPLVQAKLRNPKYVISAENAIAKSGAFTGEVSMPILKDIGVHWVILGHSERRTYYGETDEIVAQKVSEACKQGFMVIACIGETLQQREANQTAKVVLSQTSAIAAKLTKDAWNQVVLAYEPVWAIGTGKVATPEQAQEVHLLLRKWVSENIGTDVAAKLRILYGGSVNAANAATLYAKPDINGFLVGGASLKPEFRDIIDATR.

Asn12 and Lys14 together coordinate substrate. His96 (electrophile) is an active-site residue. Residue Glu168 is the Proton acceptor of the active site.

This sequence belongs to the triosephosphate isomerase family. As to quaternary structure, homodimer.

It is found in the cytoplasm. It localises to the glycosome. It carries out the reaction D-glyceraldehyde 3-phosphate = dihydroxyacetone phosphate. It participates in carbohydrate biosynthesis; gluconeogenesis. It functions in the pathway carbohydrate degradation; glycolysis; D-glyceraldehyde 3-phosphate from glycerone phosphate: step 1/1. In Leishmania mexicana, this protein is Triosephosphate isomerase.